The primary structure comprises 295 residues: ATP synthase subunit a (295 aa).

7 helical membrane-spanning segments follow: residues 41–61 (KWSA…WLGF), 101–121 (YLTI…IPVA), 129–149 (IALP…VGIR), 161–181 (LVPA…IEFV), 191–211 (LAIR…VFAL), 222–242 (FVFG…ELMI), and 244–264 (VLQA…AISS).

The protein belongs to the ATPase A chain family. As to quaternary structure, F-type ATPases have 2 components, CF(1) - the catalytic core - and CF(0) - the membrane proton channel. CF(1) has five subunits: alpha(3), beta(3), gamma(1), delta(1), epsilon(1). CF(0) has three main subunits: a(1), b(2) and c(9-12). The alpha and beta chains form an alternating ring which encloses part of the gamma chain. CF(1) is attached to CF(0) by a central stalk formed by the gamma and epsilon chains, while a peripheral stalk is formed by the delta and b chains.

It localises to the cell membrane. Functionally, key component of the proton channel; it plays a direct role in the translocation of protons across the membrane. The polypeptide is ATP synthase subunit a (Parafrankia sp. (strain EAN1pec)).